The following is a 160-amino-acid chain: Cytochrome b6-f complex subunit 4 (160 aa).

3 helical membrane passes run 36-56, 95-115, and 131-151; these read LLYT…GLAV, LLGV…PFIE, and TVFL…TLPI.

It belongs to the cytochrome b family. PetD subfamily. The 4 large subunits of the cytochrome b6-f complex are cytochrome b6, subunit IV (17 kDa polypeptide, petD), cytochrome f and the Rieske protein, while the 4 small subunits are petG, petL, petM and petN. The complex functions as a dimer.

It localises to the plastid. The protein localises to the chloroplast thylakoid membrane. In terms of biological role, component of the cytochrome b6-f complex, which mediates electron transfer between photosystem II (PSII) and photosystem I (PSI), cyclic electron flow around PSI, and state transitions. In Mesostigma viride (Green alga), this protein is Cytochrome b6-f complex subunit 4.